The chain runs to 64 residues: Large ribosomal subunit protein bL35 (64 aa).

It belongs to the bacterial ribosomal protein bL35 family.

This chain is Large ribosomal subunit protein bL35, found in Chlorobium limicola (strain DSM 245 / NBRC 103803 / 6330).